Here is a 204-residue protein sequence, read N- to C-terminus: LexA repressor (204 aa).

Residues 28-48 (VREIGEAVGLASSSTVHGHLD) constitute a DNA-binding region (H-T-H motif). Active-site for autocatalytic cleavage activity residues include S126 and K164.

This sequence belongs to the peptidase S24 family. In terms of assembly, homodimer.

It catalyses the reaction Hydrolysis of Ala-|-Gly bond in repressor LexA.. In terms of biological role, represses a number of genes involved in the response to DNA damage (SOS response), including recA and lexA. In the presence of single-stranded DNA, RecA interacts with LexA causing an autocatalytic cleavage which disrupts the DNA-binding part of LexA, leading to derepression of the SOS regulon and eventually DNA repair. The polypeptide is LexA repressor (Exiguobacterium sibiricum (strain DSM 17290 / CCUG 55495 / CIP 109462 / JCM 13490 / 255-15)).